The following is a 337-amino-acid chain: MDIDVLNMFLVAGGTLLVPLLAFMTSFLLWPAALIRIYYWYWRRALGMQVKYSSYGNYKFCYTARGKPGNKPSVLMLHGFSAHKDMWLGMVKFLPKNLHLVCVDMPGHEGTSRSALDYYSICGQVKRIHQFVESIGLNKKPFHLVGTSMGGNVAGVYAAQHPTHISSLTLICPAGLMYPIESKFLKQLKVLEKSGDNQRIPLIPSTAGEMEDMLRLCSFVRFKIPQQVLQGLIDERIPHNEFYRKLFLALVDEKSRHSLHENMNKIMAPTQIIWGKQDQVLDVSGAEVLAGSLRGCQVEILENCGHSVVMERPRKSAKLMTDFLSSLQSTDNHKKHD.

Residues 1 to 19 lie on the Extracellular side of the membrane; that stretch reads MDIDVLNMFLVAGGTLLVP. Residues 20–42 traverse the membrane as a helical; Signal-anchor for type II membrane protein segment; it reads LLAFMTSFLLWPAALIRIYYWYW. Residues 43-337 are Cytoplasmic-facing; that stretch reads RRALGMQVKY…QSTDNHKKHD (295 aa). The 242-residue stretch at 72–313 folds into the AB hydrolase-1 domain; sequence PSVLMLHGFS…CGHSVVMERP (242 aa). Residue serine 148 is the Nucleophile of the active site. Active-site charge relay system residues include aspartate 278 and histidine 306.

Belongs to the AB hydrolase superfamily.

Its subcellular location is the late endosome membrane. It localises to the lysosome membrane. The protein localises to the mitochondrion membrane. It carries out the reaction Hydrolyzes glycerol monoesters of long-chain fatty acids.. The enzyme catalyses 1-octanoylglycerol + H2O = octanoate + glycerol + H(+). It catalyses the reaction 1-decanoylglycerol + H2O = decanoate + glycerol + H(+). The catalysed reaction is 1-dodecanoylglycerol + H2O = dodecanoate + glycerol + H(+). It carries out the reaction 1-tetradecanoylglycerol + H2O = tetradecanoate + glycerol + H(+). The enzyme catalyses 2-hexadecanoylglycerol + H2O = glycerol + hexadecanoate + H(+). It catalyses the reaction 2-(9Z-octadecenoyl)-glycerol + H2O = glycerol + (9Z)-octadecenoate + H(+). The catalysed reaction is 1-(9Z-octadecenoyl)-glycerol + H2O = glycerol + (9Z)-octadecenoate + H(+). It carries out the reaction 2-(9Z,12Z-octadecadienoyl)-glycerol + H2O = (9Z,12Z)-octadecadienoate + glycerol + H(+). The enzyme catalyses 2-(5Z,8Z,11Z,14Z-eicosatetraenoyl)-glycerol + H2O = glycerol + (5Z,8Z,11Z,14Z)-eicosatetraenoate + H(+). It catalyses the reaction 1-(5Z,8Z,11Z,14Z-eicosatetraenoyl)-glycerol + H2O = glycerol + (5Z,8Z,11Z,14Z)-eicosatetraenoate + H(+). The catalysed reaction is 1-(9Z,12Z-octadecadienoyl)-glycerol + H2O = (9Z,12Z)-octadecadienoate + glycerol + H(+). It carries out the reaction 3-(9Z-octadecenoyl)-sn-glycero-1-phospho-(3'-(9Z-octadecenoyl)-1'-sn-glycerol) + H2O = 3-(9Z-octadecenoyl)-sn-glycero-1-phospho-(1'-sn-glycerol) + (9Z)-octadecenoate + H(+). The enzyme catalyses (S,S)-2-(9Z-octadecenoyl)-sn-glycero-1-phospho-(2'-(9Z-octadecenoyl)-1'-sn-glycerol) + H2O = (S,S)-2-(9Z-octadecenoyl)-sn-glycero-1-phospho-(1'-sn-glycerol) + (9Z)-octadecenoate + H(+). It catalyses the reaction (R,R)-2-(9Z-octadecenoyl)-sn-glycero-3-phospho-(2'-(9Z-octadecenoyl)-3'-sn-glycerol) + H2O = (R,R)-2-(9Z-octadecenoyl)-sn-glycero-3-phospho-(3'-sn-glycerol) + (9Z)-octadecenoate + H(+). Functionally, lipase that preferentially hydrolysis medium-chain saturated monoacylglycerols including 2-arachidonoylglycerol. Through 2-arachidonoylglycerol degradation may regulate endocannabinoid signaling pathways. Also has a lysophosphatidyl lipase activity with a preference for lysophosphatidylglycerol among other lysophospholipids. Also able to degrade bis(monoacylglycero)phosphate (BMP) and constitutes the major enzyme for BMP catabolism. BMP, also known as lysobisphosphatidic acid, is enriched in late endosomes and lysosomes and plays a key role in the formation of intraluminal vesicles and in lipid sorting. This chain is Monoacylglycerol lipase abhd6-B (abhd6-b), found in Xenopus laevis (African clawed frog).